Consider the following 466-residue polypeptide: Asparagine--tRNA ligase (466 aa).

It belongs to the class-II aminoacyl-tRNA synthetase family. Homodimer.

The protein localises to the cytoplasm. The enzyme catalyses tRNA(Asn) + L-asparagine + ATP = L-asparaginyl-tRNA(Asn) + AMP + diphosphate + H(+). This is Asparagine--tRNA ligase from Salmonella choleraesuis (strain SC-B67).